We begin with the raw amino-acid sequence, 484 residues long: MKLIVKVFPEITIKSPPVRKKFIRQLGKNIRTVLRELDADIVVGGVWDNLEVETRLTDPKVLQGIRDRLSCMPGIANFLQVAEYPLGDMDDVVAKCKLHYADLLPGTMFSVRCKRAGRHDFSSMDVEKYVGSQLRMQCGAAGIELKKPDLVVRMEIRDQRLFVVHDQHKGMGGYPLGALEQTLVLMSGGFDSTVAAYQIMRRGLMAHFCFFNLGGRAHELGVMEVAHFIWKKYGSSQRVLFVSVPFEEVLGEILQKVDNSHMGVVLKRMMLRAASAVADRLEIDVLVTGEAISQVASQTLPNLSLIDAATDKLVLRPLVATHKQDIVDLATEIGTADFARHMPEYCGVISVNPKTNAKRNRVEYEEQQFDMAILEQALERAKLVSIDRVIDDLSRNIDIEEVSQALAGQVIIDIRHPDAQEDQPLQVPGVEIQTLPFYALNSRFKALDDTRQYLLYCDKGVMSRLHAHHLLSEGHANVRVYRPS.

The region spanning 63-167 (QGIRDRLSCM…DQRLFVVHDQ (105 aa)) is the THUMP domain. ATP-binding positions include 185-186 (LM), Lys267, Gly289, and Gln298. Cys346 and Cys457 are disulfide-bonded. The Rhodanese domain maps to 405–483 (ALAGQVIIDI…GHANVRVYRP (79 aa)). The active-site Cysteine persulfide intermediate is Cys457.

Belongs to the ThiI family.

The protein localises to the cytoplasm. The catalysed reaction is [ThiI sulfur-carrier protein]-S-sulfanyl-L-cysteine + a uridine in tRNA + 2 reduced [2Fe-2S]-[ferredoxin] + ATP + H(+) = [ThiI sulfur-carrier protein]-L-cysteine + a 4-thiouridine in tRNA + 2 oxidized [2Fe-2S]-[ferredoxin] + AMP + diphosphate. It catalyses the reaction [ThiS sulfur-carrier protein]-C-terminal Gly-Gly-AMP + S-sulfanyl-L-cysteinyl-[cysteine desulfurase] + AH2 = [ThiS sulfur-carrier protein]-C-terminal-Gly-aminoethanethioate + L-cysteinyl-[cysteine desulfurase] + A + AMP + 2 H(+). The protein operates within cofactor biosynthesis; thiamine diphosphate biosynthesis. In terms of biological role, catalyzes the ATP-dependent transfer of a sulfur to tRNA to produce 4-thiouridine in position 8 of tRNAs, which functions as a near-UV photosensor. Also catalyzes the transfer of sulfur to the sulfur carrier protein ThiS, forming ThiS-thiocarboxylate. This is a step in the synthesis of thiazole, in the thiamine biosynthesis pathway. The sulfur is donated as persulfide by IscS. This chain is tRNA sulfurtransferase, found in Pseudomonas syringae pv. tomato (strain ATCC BAA-871 / DC3000).